The sequence spans 904 residues: MAANNNSDPILDEGGGGGVKHEAVGEAGEGKGGGGGAAATQAPAAMLPRSGSRPQLDLSGAAIHGNLEDRNPTILLPNQSDDISHLALDIGGSLIKLVYFSRHAEHSSEDKRKLSTKRRLGMLNGGRRSYPVLGGRLHFVKFETGKLNECLDFISSKQLHRGGVDSPSWRSGAQPDNIVIKATGGGAFKYADLFKERLGVSLEKEDEMDCLVAGANFLLKSIRHEAFTHMDGQKEYVQIDQNDLFPFLLVNVGSGVSIIKVDGHGKFQRVSGTNVGGGTYWGLGRLMTKCKSFDELLELSQRGDNSTIDMLVGDIYGGLDYSKIGLSASTIASSFGKTISDDKELSDYRPEDISLSLLRMISYNIGQISYLNALRYGLKRIFFGGFFIRGHAYTMDTISFAVNFWSKGEAKAMFLRHEGFLGALGAFMSYEKHGLDDLRIHHLVERFPMGAPYVGGKIHGPPLGDLNEKISWMEKFVQKGTQITAPVPVGFPVTTGMGGFERPTAKGDILRSDASAALNVGVLHLVPTLDVFPLLEDPKMYEPNTIDLDLNEYKYWFKILSDHLPDLVDKAVASEGGTDDAKRRGDAFAHAFSAHLARLMEEPAAYGKFGLANLLELREECLREFQFVDAYVSIKQRENEASLAVLPDLLMELDSMNEEARLLALIEGVLAANIFDWGSRACVDLYHKGTIIEIYRMSRKKMQRPWRIDDFDMFKKRMLADKKGQPYKRALLFVDNSGADVVLGMIPLARELLRNGTEVVLVANSLPALNDVTANELPGIVAEAAKHCGILRKAAEAGGLIFDAMAGIQDDLKDEPVSVPLMVVENGCGSPCIDFRQVSSELAAAAKDADLLILEGMGRSLHTNLNARFKCDTLKLAMVKNQRLAEKLFNGNIYDCICKFEPVP.

Residues methionine 1 to leucine 56 form a disordered region. Positions methionine 1–tryptophan 472 are pantothenate kinase. The interval methionine 473–proline 904 is 4'-phosphopantetheine phosphatase. 3 residues coordinate Mn(2+): aspartate 735, asparagine 736, and aspartate 771. Positions glutamate 855–arginine 859 match the Subfamily II EGMGR motif motif.

In the N-terminal section; belongs to the type II pantothenate kinase family. The protein in the C-terminal section; belongs to the damage-control phosphatase family. Phosphopantetheine phosphatase II subfamily. Mn(2+) is required as a cofactor. It depends on Ni(2+) as a cofactor.

The catalysed reaction is (R)-pantothenate + ATP = (R)-4'-phosphopantothenate + ADP + H(+). The enzyme catalyses (R)-4'-phosphopantothenate + H2O = (R)-pantothenate + phosphate. It catalyses the reaction (R)-4'-phosphopantetheine + H2O = (R)-pantetheine + phosphate. It carries out the reaction (R)-4'-phosphopantetheine sulfonate + H2O = (R)-pantetheine sulfonate + phosphate. It participates in cofactor biosynthesis; coenzyme A biosynthesis; CoA from (R)-pantothenate: step 1/5. Catalyzes the phosphorylation of pantothenate the first step in CoA biosynthesis. May play a role in the physiological regulation of the intracellular CoA concentration. Functionally redudant with PANK1. The phosphatase activity shows preference for normal or oxidatively damaged intermediates of 4'-phosphopantetheine, which provides strong indirect evidence that the phosphatase activity pre-empts damage in the CoA pathway. Hydrolyzing excess 4'-phosphopantetheine could constitute a directed overflow mechanism to prevent its oxidation to the S-sulfonate, sulfonate, or other forms. Hydrolyzing 4'-phosphopantetheine sulfonate or S-sulfonate would forestall their conversion to inactive forms of CoA and acyl carrier protein. This chain is Pantothenate kinase 2, found in Oryza sativa subsp. japonica (Rice).